The chain runs to 485 residues: Membrane-bound lytic murein transglycosylase F (485 aa).

Residues 1-29 form the signal peptide; the sequence is MFAHTALRQRCAKWLFATGLFLLLGACVE. The interval 30–267 is non-LT domain; it reads KPSTLERVKE…RLKDRYYGHV (238 aa). Residues 268–485 are LT domain; it reads DVLGYVGAYT…DKPADQSPPM (218 aa). The active site involves Glu314. The disordered stretch occupies residues 465 to 485; sequence EGNLHVPGVNKDKPADQSPPM.

This sequence in the N-terminal section; belongs to the bacterial solute-binding protein 3 family. In the C-terminal section; belongs to the transglycosylase Slt family.

Its subcellular location is the cell outer membrane. The catalysed reaction is Exolytic cleavage of the (1-&gt;4)-beta-glycosidic linkage between N-acetylmuramic acid (MurNAc) and N-acetylglucosamine (GlcNAc) residues in peptidoglycan, from either the reducing or the non-reducing ends of the peptidoglycan chains, with concomitant formation of a 1,6-anhydrobond in the MurNAc residue.. In terms of biological role, murein-degrading enzyme that degrades murein glycan strands and insoluble, high-molecular weight murein sacculi, with the concomitant formation of a 1,6-anhydromuramoyl product. Lytic transglycosylases (LTs) play an integral role in the metabolism of the peptidoglycan (PG) sacculus. Their lytic action creates space within the PG sacculus to allow for its expansion as well as for the insertion of various structures such as secretion systems and flagella. The polypeptide is Membrane-bound lytic murein transglycosylase F (Pseudomonas putida (strain GB-1)).